We begin with the raw amino-acid sequence, 527 residues long: Peptide chain release factor 3 (527 aa).

A tr-type G domain is found at 9–278; that stretch reads NKRRTFAIIS…GLTQWAPKPQ (270 aa). GTP contacts are provided by residues 18-25, 86-90, and 140-143; these read SHPDAGKT, DTPGH, and NKLD.

This sequence belongs to the TRAFAC class translation factor GTPase superfamily. Classic translation factor GTPase family. PrfC subfamily.

Its subcellular location is the cytoplasm. Its function is as follows. Increases the formation of ribosomal termination complexes and stimulates activities of RF-1 and RF-2. It binds guanine nucleotides and has strong preference for UGA stop codons. It may interact directly with the ribosome. The stimulation of RF-1 and RF-2 is significantly reduced by GTP and GDP, but not by GMP. This Haemophilus influenzae (strain PittGG) protein is Peptide chain release factor 3.